The chain runs to 693 residues: Elongation factor G (693 aa).

The tr-type G domain maps to 8-282; it reads EKTRNIGIMA…AVIDYLPSPL (275 aa). Residues 17–24, 81–85, and 135–138 contribute to the GTP site; these read AHVDAGKT, DTPGH, and NKMD.

This sequence belongs to the TRAFAC class translation factor GTPase superfamily. Classic translation factor GTPase family. EF-G/EF-2 subfamily.

It localises to the cytoplasm. Catalyzes the GTP-dependent ribosomal translocation step during translation elongation. During this step, the ribosome changes from the pre-translocational (PRE) to the post-translocational (POST) state as the newly formed A-site-bound peptidyl-tRNA and P-site-bound deacylated tRNA move to the P and E sites, respectively. Catalyzes the coordinated movement of the two tRNA molecules, the mRNA and conformational changes in the ribosome. This Streptococcus pneumoniae (strain Hungary19A-6) protein is Elongation factor G.